The sequence spans 100 residues: UPF0235 protein TC_0667 (100 aa).

Belongs to the UPF0235 family.

This is UPF0235 protein TC_0667 from Chlamydia muridarum (strain MoPn / Nigg).